The following is a 207-amino-acid chain: MKIIHKGLVEYLPTFEAMKTFNAGRNADTEDELWVVEHPPVFTQGLVGKPEHLLIRDDIPVVQIDRGGQITYHGPGQLVVYTMIDFKRRKTSVRNIVSALENSIIATLAEYGIEAAADPKRPGVYVGERKIASLGLRIKNGSVYHGLALNVNMDLSPFTHINPCGYAGMEMTQIADFVQPCPTPDEVAAKLTAHLETQFTPKADNNE.

In terms of domain architecture, BPL/LPL catalytic spans 27 to 203; sequence ADTEDELWVV…HLETQFTPKA (177 aa). Residues 66 to 73, 133 to 135, and 146 to 148 contribute to the substrate site; these read RGGQITYH, SLG, and GLA. The active-site Acyl-thioester intermediate is C164.

Belongs to the LipB family.

It localises to the cytoplasm. The catalysed reaction is octanoyl-[ACP] + L-lysyl-[protein] = N(6)-octanoyl-L-lysyl-[protein] + holo-[ACP] + H(+). It functions in the pathway protein modification; protein lipoylation via endogenous pathway; protein N(6)-(lipoyl)lysine from octanoyl-[acyl-carrier-protein]: step 1/2. In terms of biological role, catalyzes the transfer of endogenously produced octanoic acid from octanoyl-acyl-carrier-protein onto the lipoyl domains of lipoate-dependent enzymes. Lipoyl-ACP can also act as a substrate although octanoyl-ACP is likely to be the physiological substrate. The sequence is that of Octanoyltransferase from Neisseria meningitidis serogroup A / serotype 4A (strain DSM 15465 / Z2491).